The sequence spans 543 residues: Oxalate--CoA ligase (543 aa).

196–207 contributes to the ATP binding site; that stretch reads HTSGTTSTPKTV. The FACS signature appears at 410–458; the sequence is ENYFRTGDQGYFDPEGFLVLTGRIKELINRGGEKISPIELDGIMLSHPK. A C-terminal peroxisome targeting signal (PTS1) motif is present at residues 541-543; it reads SKL.

It belongs to the ATP-dependent AMP-binding enzyme family. In terms of assembly, interacts with PEX5.

Its subcellular location is the peroxisome matrix. It is found in the peroxisome membrane. The enzyme catalyses oxalate + ATP + CoA = oxalyl-CoA + AMP + diphosphate. Catalyzes the first step in a degradation pathway of oxalate to CO(2) to protect the cell against the harmful effects of oxalate derived from endogenous processes or an environmental sources. The polypeptide is Oxalate--CoA ligase (Saccharomyces cerevisiae (strain ATCC 204508 / S288c) (Baker's yeast)).